We begin with the raw amino-acid sequence, 155 residues long: UPF0178 protein Amet_2995 (155 aa).

It belongs to the UPF0178 family.

In Alkaliphilus metalliredigens (strain QYMF), this protein is UPF0178 protein Amet_2995.